We begin with the raw amino-acid sequence, 119 residues long: Ribonuclease P protein component (119 aa).

It belongs to the RnpA family. As to quaternary structure, consists of a catalytic RNA component (M1 or rnpB) and a protein subunit.

It carries out the reaction Endonucleolytic cleavage of RNA, removing 5'-extranucleotides from tRNA precursor.. In terms of biological role, RNaseP catalyzes the removal of the 5'-leader sequence from pre-tRNA to produce the mature 5'-terminus. It can also cleave other RNA substrates such as 4.5S RNA. The protein component plays an auxiliary but essential role in vivo by binding to the 5'-leader sequence and broadening the substrate specificity of the ribozyme. The chain is Ribonuclease P protein component from Streptococcus equi subsp. zooepidemicus (strain MGCS10565).